The following is a 92-amino-acid chain: Endoribonuclease HigB (92 aa).

Residue H92 is part of the active site.

As to quaternary structure, forms a complex with the antitoxin HigA which inhibits the mRNA interferase activity. The heterodimer dimerizes to form a HigB-(HigA)2-HigB tetramer that is able to bind to the DNA.

In terms of biological role, toxic component of a type II toxin-antitoxin (TA) system. A ribosome-associated translation-dependent mRNA interferase. Inhibits translation by sequence-specific cleavage of mRNA. Prefers either in-frame or out-of-frame 5'-AAA-3' codons (lysine). Also cleaves the first three AAAs of stretches of four or more A sequences. 20% of codons containing AA are cleaved and occassionally cuts even at a single A. The protein is Endoribonuclease HigB of Proteus vulgaris.